A 679-amino-acid chain; its full sequence is Protein hook (679 aa).

One can recognise a Calponin-homology (CH) domain in the interval 6–123; sequence NEMYYSLLEW…RLLQLVLGCA (118 aa). Coiled coils occupy residues 135–437 and 480–574; these read EIMC…LKCG and QTAL…QEIL.

Belongs to the hook family. Homodimer. Interacts with microtubules via its N-terminus.

Its subcellular location is the cytoplasm. The protein localises to the cytoskeleton. It is found in the endosome. The protein resides in the synapse. Functionally, involved in endocytic trafficking by stabilizing organelles of the endocytic pathway. Probably acts as a cytoskeletal linker protein required to tether endosome vesicles to the cytoskeleton. Involved in modulation of endocytosis at stages required for down-regulation of membrane proteins that control synapse size. Not involved in synaptic vesicle recycling. Required in R7 cells for boss endocytosis into multivesicular bodies (MVBs). Has a role in regulating adult longevity. This is Protein hook from Drosophila sechellia (Fruit fly).